The primary structure comprises 347 residues: uncharacterized protein (347 aa).

The Cytoplasmic portion of the chain corresponds to 1 to 44 (MWNPKKKSEALAKFKSFPYPKPGTSNVLDSKEGDTRRKYFTKTH). Residues 45–62 (LHRLFVFVVLLLCSGYFL) form a helical; Signal-anchor for type II membrane protein membrane-spanning segment. The Lumenal segment spans residues 63 to 347 (KHTLLTRPKE…RGWRKLVPFL (285 aa)).

This sequence belongs to the glycosyltransferase 34 family.

It localises to the endoplasmic reticulum membrane. This is an uncharacterized protein from Schizosaccharomyces pombe (strain 972 / ATCC 24843) (Fission yeast).